Here is a 77-residue protein sequence, read N- to C-terminus: Translation initiation factor IF-1, chloroplastic (77 aa).

One can recognise an S1-like domain in the interval 1-71 (MKEQKLIHEG…TRGRIIYRLR (71 aa)).

This sequence belongs to the IF-1 family. As to quaternary structure, component of the 30S ribosomal translation pre-initiation complex which assembles on the 30S ribosome in the order IF-2 and IF-3, IF-1 and N-formylmethionyl-tRNA(fMet); mRNA recruitment can occur at any time during PIC assembly.

Its subcellular location is the plastid. It localises to the chloroplast. One of the essential components for the initiation of protein synthesis. Stabilizes the binding of IF-2 and IF-3 on the 30S subunit to which N-formylmethionyl-tRNA(fMet) subsequently binds. Helps modulate mRNA selection, yielding the 30S pre-initiation complex (PIC). Upon addition of the 50S ribosomal subunit IF-1, IF-2 and IF-3 are released leaving the mature 70S translation initiation complex. This is Translation initiation factor IF-1, chloroplastic from Liriodendron tulipifera (Tuliptree).